The following is a 401-amino-acid chain: Imidazolonepropionase (401 aa).

The Fe(3+) site is built by H70 and H72. Residues H70 and H72 each coordinate Zn(2+). 4-imidazolone-5-propanoate is bound by residues R79, Y142, and H175. Y142 lines the N-formimidoyl-L-glutamate pocket. Residue H238 participates in Fe(3+) binding. H238 is a Zn(2+) binding site. Residue Q241 participates in 4-imidazolone-5-propanoate binding. D313 contributes to the Fe(3+) binding site. Zn(2+) is bound at residue D313. Residues N315 and G317 each coordinate N-formimidoyl-L-glutamate. 4-imidazolone-5-propanoate is bound at residue T318.

It belongs to the metallo-dependent hydrolases superfamily. HutI family. The cofactor is Zn(2+). Requires Fe(3+) as cofactor.

It localises to the cytoplasm. It catalyses the reaction 4-imidazolone-5-propanoate + H2O = N-formimidoyl-L-glutamate. Its pathway is amino-acid degradation; L-histidine degradation into L-glutamate; N-formimidoyl-L-glutamate from L-histidine: step 3/3. Catalyzes the hydrolytic cleavage of the carbon-nitrogen bond in imidazolone-5-propanoate to yield N-formimidoyl-L-glutamate. It is the third step in the universal histidine degradation pathway. The protein is Imidazolonepropionase of Xanthomonas axonopodis pv. citri (strain 306).